The following is a 145-amino-acid chain: Anaerobic nitrite reductase NSHB5 (145 aa).

Positions Gly-2 to Lys-142 constitute a Globin domain. The Homodimerization signature appears at Glu-35–Ala-39. 6 residues coordinate heme b: Ser-45, His-59, Lys-61, Arg-84, Thr-88, and His-89. Residues Asp-96–Asp-108 carry the Homodimerization motif.

Belongs to the plant globin family. As to quaternary structure, homodimer. It depends on heme b as a cofactor. As to expression, expressed in embryonic (embryos, coleoptiles and seminal roots) and vegetative (leaves and roots) organs.

It localises to the cytoplasm. It is found in the nucleus. It catalyses the reaction Fe(III)-heme b-[protein] + nitric oxide + H2O = Fe(II)-heme b-[protein] + nitrite + 2 H(+). Functionally, phytoglobin that reduces nitrite to nitric oxide under anoxic conditions (e.g. during flooding or in waterlogged soil). May not function as an oxygen storage or transport protein. Has an unusually high affinity for O(2) through an hexacoordinate heme iron because of a very low dissociation constant. The protein is Anaerobic nitrite reductase NSHB5 of Oryza sativa subsp. japonica (Rice).